A 244-amino-acid polypeptide reads, in one-letter code: Troponin I, cardiac muscle (244 aa).

The segment covering 1 to 25 has biased composition (acidic residues); the sequence is MSDEEEVTYEEEEEEYVEEEEEEVV. The tract at residues 1–67 is disordered; sequence MSDEEEVTYE…PQVKRKPKIS (67 aa). Ser-2 carries the post-translational modification N-acetylserine. Ser-2 carries the post-translational modification Phosphoserine; by CK2. Positions 27–42 are enriched in pro residues; that stretch reads PEPPKPAPPPAAPPPL.

This sequence belongs to the troponin I family. As to quaternary structure, binds to actin and tropomyosin. In terms of tissue distribution, heart.

Functionally, troponin I is the inhibitory subunit of troponin, the thin filament regulatory complex which confers calcium-sensitivity to striated muscle actomyosin ATPase activity. This is Troponin I, cardiac muscle (tnni3) from Xenopus laevis (African clawed frog).